Reading from the N-terminus, the 372-residue chain is Flap endonuclease 1 (372 aa).

The tract at residues 1–105 is N-domain; it reads MGVKGLNQLI…GELEKRLLRR (105 aa). Asp-34 serves as a coordination point for Mg(2+). Arg-47 and Arg-71 together coordinate DNA. Residues Asp-87, Glu-159, Glu-161, Asp-180, and Asp-182 each coordinate Mg(2+). Residues 123-254 form an I-domain region; that stretch reads EVLKFEKRLV…ATAFKLIKEH (132 aa). Glu-159 provides a ligand contact to DNA. Positions 232 and 234 each coordinate DNA. Residue Asp-234 participates in Mg(2+) binding. The interval 339–347 is interaction with PCNA; sequence VQGRLDGFF.

This sequence belongs to the XPG/RAD2 endonuclease family. FEN1 subfamily. In terms of assembly, interacts with PCNA. Three molecules of RAD27 bind to one PCNA trimer with each molecule binding to one PCNA monomer. PCNA stimulates the nuclease activity without altering cleavage specificity. Requires Mg(2+) as cofactor. Phosphorylated. Phosphorylation upon DNA damage induces relocalization to the nuclear plasma.

It is found in the nucleus. The protein resides in the nucleolus. The protein localises to the nucleoplasm. It localises to the mitochondrion. Its function is as follows. Structure-specific nuclease with 5'-flap endonuclease and 5'-3' exonuclease activities involved in DNA replication and repair. During DNA replication, cleaves the 5'-overhanging flap structure that is generated by displacement synthesis when DNA polymerase encounters the 5'-end of a downstream Okazaki fragment. It enters the flap from the 5'-end and then tracks to cleave the flap base, leaving a nick for ligation. Also involved in the long patch base excision repair (LP-BER) pathway, by cleaving within the apurinic/apyrimidinic (AP) site-terminated flap. Acts as a genome stabilization factor that prevents flaps from equilibrating into structures that lead to duplications and deletions. Also possesses 5'-3' exonuclease activity on nicked or gapped double-stranded DNA, and exhibits RNase H activity. Also involved in replication and repair of rDNA and in repairing mitochondrial DNA. This chain is Flap endonuclease 1, found in Candida dubliniensis (strain CD36 / ATCC MYA-646 / CBS 7987 / NCPF 3949 / NRRL Y-17841) (Yeast).